Consider the following 599-residue polypeptide: Riboflavin biosynthesis protein PYRR, chloroplastic (599 aa).

The N-terminal 17 residues, 1 to 17 (MALSFRISSSSPLICRA), are a transit peptide targeting the chloroplast. One can recognise a CMP/dCMP-type deaminase domain in the interval 30 to 152 (TTDAAFIRRA…ELRSHGIEVN (123 aa)).

This sequence in the C-terminal section; belongs to the YbiA family.

It localises to the plastid. The protein resides in the chloroplast. The catalysed reaction is 5-amino-6-(5-phospho-D-ribitylamino)uracil + NADP(+) = 5-amino-6-(5-phospho-D-ribosylamino)uracil + NADPH + H(+). It catalyses the reaction 2,5-diamino-6-hydroxy-4-(5-phosphoribosylamino)-pyrimidine + H2O = 2,5,6-triamino-4-hydroxypyrimidine + D-ribose 5-phosphate. The enzyme catalyses 5-amino-6-(5-phospho-D-ribosylamino)uracil + H2O = 5,6-diaminouracil + D-ribose 5-phosphate. Its pathway is cofactor biosynthesis; riboflavin biosynthesis; 5-amino-6-(D-ribitylamino)uracil from GTP: step 3/4. Pyrimidine reductase involved in the riboflavin biosynthesis pathway. Also has a non-functional N-terminal deaminase domain that lacks the catalytically essential zinc-binding residues. Its function is as follows. Catalyzes the hydrolysis of the N-glycosidic bond in the first two intermediates of riboflavin biosynthesis, which are highly reactive metabolites, yielding relatively innocuous products. Thus, can divert a surplus of harmful intermediates into relatively harmless products and pre-empt the damage these intermediates would otherwise do. Helps maintain flavin levels. Has no activity against GTP, nucleoside monophosphates or ADP-ribose. This chain is Riboflavin biosynthesis protein PYRR, chloroplastic (PYRR), found in Arabidopsis thaliana (Mouse-ear cress).